An 84-amino-acid chain; its full sequence is uncharacterized protein (84 aa).

This is an uncharacterized protein from Escherichia coli O6:H1 (strain CFT073 / ATCC 700928 / UPEC).